The chain runs to 285 residues: RNA 5'-monophosphate methyltransferase (285 aa).

S-adenosyl-L-methionine-binding positions include arginine 46, asparagine 77, aspartate 111, 136–137 (DI), and methionine 165. The region spanning 53 to 275 (ELLRQLFPPE…KHTHETQAIP (223 aa)) is the Bin3-type SAM domain.

It belongs to the methyltransferase superfamily. Interacts with DICER1; the interaction may be mediated by RNA.

The protein localises to the cytoplasm. The enzyme catalyses a 5'-end 5'-phospho-ribonucleoside-RNA + S-adenosyl-L-methionine = a 5'-end (5'-methylphospho)-ribonucleoside-RNA + S-adenosyl-L-homocysteine. It carries out the reaction a 5'-end 5'-phospho-ribonucleoside-RNA + 2 S-adenosyl-L-methionine = a 5'-end (5'-bismethylphospho)-ribonucleoside-RNA + 2 S-adenosyl-L-homocysteine. Its function is as follows. O-methyltransferase that specifically monomethylates 5'-monophosphate of cytoplasmic histidyl tRNA (tRNA(His)), acting as a capping enzyme by protecting tRNA(His) from cleavage by DICER1. Also able, with less efficiently, to methylate the 5' monophosphate of a subset of pre-miRNAs, acting as a negative regulator of miRNA processing. The 5' monophosphate of pre-miRNAs is recognized by DICER1 and is required for pre-miRNAs processing: methylation at this position reduces the processing of pre-miRNAs by DICER1. Was also reported to mediate dimethylation of pre-miR-145; however dimethylation cannot be reproduced by another group which observes a monomethylation of pre-miR-145. The protein is RNA 5'-monophosphate methyltransferase of Mus musculus (Mouse).